Here is a 68-residue protein sequence, read N- to C-terminus: Beta-defensin 1 (68 aa).

An N-terminal signal peptide occupies residues 1-21; the sequence is MRTSYLLLFTLCLLLSEMASG. Positions 22–32 are excised as a propeptide; the sequence is DNFLTGLGHRS. 3 disulfide bridges follow: C37-C66, C44-C59, and C49-C67.

This sequence belongs to the beta-defensin family. In terms of assembly, monomer. Homodimer.

It is found in the secreted. Its subcellular location is the membrane. Its function is as follows. Has bactericidal activity. May act as a ligand for C-C chemokine receptor CCR6. Positively regulates the sperm motility and bactericidal activity in a CCR6-dependent manner. Binds to CCR6 and triggers Ca2+ mobilization in the sperm which is important for its motility. This is Beta-defensin 1 (DEFB1) from Allochrocebus preussi (Preuss's monkey).